The primary structure comprises 168 residues: Cysteine-rich perinuclear theca protein 1 (168 aa).

A disordered region spans residues 144 to 168; sequence NVSDPEEVPPCLDSDPFPNGDLASS.

As to expression, specifically expressed in spermatozoa (at protein level). Detected from the elongated spermatid stage onwards; not found in immature germ cells or somatic cells (at protein level).

The protein localises to the cytoplasm. It localises to the cytoskeleton. Its subcellular location is the perinuclear theca. The protein is Cysteine-rich perinuclear theca protein 1 of Mus musculus (Mouse).